The sequence spans 214 residues: Guanylate kinase (214 aa).

The Guanylate kinase-like domain occupies G6–R192. A13–T20 serves as a coordination point for ATP.

The protein belongs to the guanylate kinase family.

It is found in the cytoplasm. It catalyses the reaction GMP + ATP = GDP + ADP. In terms of biological role, essential for recycling GMP and indirectly, cGMP. The chain is Guanylate kinase from Pseudomonas syringae pv. syringae (strain B728a).